A 97-amino-acid polypeptide reads, in one-letter code: Citrate lyase acyl carrier protein (97 aa).

Ser-14 is modified (O-(phosphoribosyl dephospho-coenzyme A)serine).

Belongs to the CitD family. Oligomer with a subunit composition of (alpha,beta,gamma)6.

The protein resides in the cytoplasm. In terms of biological role, covalent carrier of the coenzyme of citrate lyase. This Lactobacillus helveticus (strain DPC 4571) protein is Citrate lyase acyl carrier protein.